The primary structure comprises 365 residues: tRNA/tmRNA (uracil-C(5))-methyltransferase (365 aa).

Residues glutamine 189, tyrosine 217, asparagine 222, glutamate 238, and aspartate 298 each coordinate S-adenosyl-L-methionine. Residue cysteine 323 is the Nucleophile of the active site. The Proton acceptor role is filled by glutamate 357.

Belongs to the class I-like SAM-binding methyltransferase superfamily. RNA M5U methyltransferase family. TrmA subfamily.

It carries out the reaction uridine(54) in tRNA + S-adenosyl-L-methionine = 5-methyluridine(54) in tRNA + S-adenosyl-L-homocysteine + H(+). The enzyme catalyses uridine(341) in tmRNA + S-adenosyl-L-methionine = 5-methyluridine(341) in tmRNA + S-adenosyl-L-homocysteine + H(+). Functionally, dual-specificity methyltransferase that catalyzes the formation of 5-methyluridine at position 54 (m5U54) in all tRNAs, and that of position 341 (m5U341) in tmRNA (transfer-mRNA). This Shewanella halifaxensis (strain HAW-EB4) protein is tRNA/tmRNA (uracil-C(5))-methyltransferase.